Here is a 337-residue protein sequence, read N- to C-terminus: tRNA N6-adenosine threonylcarbamoyltransferase (337 aa).

Histidine 111 and histidine 115 together coordinate Fe cation. Residues 134–138 (LVSGG), aspartate 167, glycine 180, and asparagine 272 each bind substrate. Aspartate 300 contacts Fe cation.

This sequence belongs to the KAE1 / TsaD family. It depends on Fe(2+) as a cofactor.

The protein localises to the cytoplasm. It carries out the reaction L-threonylcarbamoyladenylate + adenosine(37) in tRNA = N(6)-L-threonylcarbamoyladenosine(37) in tRNA + AMP + H(+). Required for the formation of a threonylcarbamoyl group on adenosine at position 37 (t(6)A37) in tRNAs that read codons beginning with adenine. Is involved in the transfer of the threonylcarbamoyl moiety of threonylcarbamoyl-AMP (TC-AMP) to the N6 group of A37, together with TsaE and TsaB. TsaD likely plays a direct catalytic role in this reaction. This is tRNA N6-adenosine threonylcarbamoyltransferase from Escherichia coli O45:K1 (strain S88 / ExPEC).